We begin with the raw amino-acid sequence, 1254 residues long: Zinc finger protein BRUTUS-like At1g18910 (1254 aa).

The tract at residues 1–30 (MGVGDPLPLPPEKNRREVNKPPDIASTSSS) is disordered. Residues 454–474 (IHFLPLGLLKCVIMWFSAQLP) traverse the membrane as a helical segment. Residues 1013 to 1082 (PHKLIFGCKH…ASCSNISCSS (70 aa)) form a CHY-type zinc finger. Zn(2+) is bound by residues Cys1020, His1022, Cys1033, Cys1034, Cys1040, Cys1043, His1044, His1050, Cys1062, Cys1065, Cys1075, Cys1080, Cys1089, Cys1092, His1103, Cys1104, Cys1107, Cys1110, His1122, Cys1123, Cys1126, Cys1129, His1137, and Cys1139. A CTCHY-type zinc finger spans residues 1084-1147 (MGKYYCKICK…VCREKCLEDN (64 aa)). An RING-type; atypical zinc finger spans residues 1148 to 1190 (CPICHEYIFTSNSPVKALPCGHVMHSTCFQEYTCSHYTCPICS).

Binds zinc and iron ions.

It is found in the membrane. The protein localises to the nucleus. It participates in protein modification; protein ubiquitination. Its function is as follows. Probable E3 ubiquitin-protein ligase that may regulate the response to iron deficiency and thus contributes to iron homeostasis. This is Zinc finger protein BRUTUS-like At1g18910 from Arabidopsis thaliana (Mouse-ear cress).